Here is a 358-residue protein sequence, read N- to C-terminus: Uroporphyrinogen decarboxylase (358 aa).

Substrate contacts are provided by residues 29–33 (RQAGR), Phe-48, Asp-79, Tyr-155, Ser-210, and His-330.

This sequence belongs to the uroporphyrinogen decarboxylase family. In terms of assembly, homodimer.

It is found in the cytoplasm. It carries out the reaction uroporphyrinogen III + 4 H(+) = coproporphyrinogen III + 4 CO2. It participates in porphyrin-containing compound metabolism; protoporphyrin-IX biosynthesis; coproporphyrinogen-III from 5-aminolevulinate: step 4/4. Functionally, catalyzes the decarboxylation of four acetate groups of uroporphyrinogen-III to yield coproporphyrinogen-III. The chain is Uroporphyrinogen decarboxylase from Bordetella bronchiseptica (strain ATCC BAA-588 / NCTC 13252 / RB50) (Alcaligenes bronchisepticus).